The primary structure comprises 522 residues: Cytochrome P450 9c1 (522 aa).

Residue Cys464 coordinates heme.

It belongs to the cytochrome P450 family. Requires heme as cofactor.

The protein resides in the endoplasmic reticulum membrane. The protein localises to the microsome membrane. Its function is as follows. May be involved in the metabolism of insect hormones and in the breakdown of synthetic insecticides. The chain is Cytochrome P450 9c1 (Cyp9c1) from Drosophila melanogaster (Fruit fly).